Here is a 368-residue protein sequence, read N- to C-terminus: 2-deoxy-scyllo-inosose synthase (368 aa).

Residues Asp-42, 72–75 (EEYK), 104–108 (GLTGN), 128–129 (TT), 139–141 (SIK), 150–151 (KN), and Gln-176 contribute to the NAD(+) site. The active site involves Lys-141. Glu-183 contributes to the Co(2+) binding site. Residue Glu-243 is part of the active site. The Co(2+) site is built by His-246 and His-262.

Belongs to the sugar phosphate cyclases superfamily. DOI synthase family. Was isolated as a heterodimeric enzyme comprising of BtrC and a smaller polypeptide further identified as PdxT by sequence homology. Homodimer in solution. It depends on NAD(+) as a cofactor. Co(2+) is required as a cofactor.

The catalysed reaction is D-glucose 6-phosphate = 2-deoxy-L-scyllo-inosose + phosphate. Its pathway is metabolic intermediate biosynthesis; 2-deoxystreptamine biosynthesis; 2-deoxystreptamine from D-glucose 6-phosphate: step 1/4. The protein operates within antibiotic biosynthesis; butirosin biosynthesis. With respect to regulation, strongly inhibited by EDTA, zinc and Cu(2+). In terms of biological role, catalyzes the intramolecular carbocycle formation from D-glucose-6-phosphate to 2-deoxy-scyllo-inosose (DOI). In Niallia circulans (Bacillus circulans), this protein is 2-deoxy-scyllo-inosose synthase (btrC).